A 239-amino-acid polypeptide reads, in one-letter code: Riboflavin synthase (239 aa).

Lumazine-binding repeat units follow at residues 1–105 and 106–205; these read MFTG…MGGH and VVQG…EKQI. Residues 4–6, 54–56, 70–75, 109–111, K145, 154–156, and 170–175 each bind 2,4-dihydroxypteridine; these read GLV, CLT, GISPET, GHV, SLT, and SMVSYT.

As to quaternary structure, homotrimer.

The enzyme catalyses 2 6,7-dimethyl-8-(1-D-ribityl)lumazine + H(+) = 5-amino-6-(D-ribitylamino)uracil + riboflavin. Its pathway is cofactor biosynthesis; riboflavin biosynthesis; riboflavin from 2-hydroxy-3-oxobutyl phosphate and 5-amino-6-(D-ribitylamino)uracil: step 2/2. In terms of biological role, catalyzes the dismutation of two molecules of 6,7-dimethyl-8-ribityllumazine, resulting in the formation of riboflavin and 5-amino-6-(D-ribitylamino)uracil. This chain is Riboflavin synthase (RIB5), found in Meyerozyma guilliermondii (strain ATCC 6260 / CBS 566 / DSM 6381 / JCM 1539 / NBRC 10279 / NRRL Y-324) (Yeast).